The primary structure comprises 497 residues: Glycerol kinase (497 aa).

T12 contacts ADP. 3 residues coordinate ATP: T12, T13, and S14. Sn-glycerol 3-phosphate is bound at residue T12. Residue R16 participates in ADP binding. Sn-glycerol 3-phosphate contacts are provided by R82, E83, Y132, and D239. Residues R82, E83, Y132, D239, and Q240 each contribute to the glycerol site. Residues T261 and G303 each coordinate ADP. ATP-binding residues include T261, G303, Q307, and G402. Residues G402 and N406 each contribute to the ADP site.

The protein belongs to the FGGY kinase family. In terms of assembly, homodimer.

The enzyme catalyses glycerol + ATP = sn-glycerol 3-phosphate + ADP + H(+). Its pathway is polyol metabolism; glycerol degradation via glycerol kinase pathway; sn-glycerol 3-phosphate from glycerol: step 1/1. Functionally, key enzyme in the regulation of glycerol uptake and metabolism. Catalyzes the phosphorylation of glycerol to yield sn-glycerol 3-phosphate. Can utilize other nucleoside triphosphates (GTP, CTP, UTP and ITP) as a phosphoryl donor. The polypeptide is Glycerol kinase (Thermococcus kodakarensis (strain ATCC BAA-918 / JCM 12380 / KOD1) (Pyrococcus kodakaraensis (strain KOD1))).